The chain runs to 330 residues: Ferredoxin--NADP reductase (330 aa).

Glu34, Gln42, Tyr47, Val87, Phe121, Asp285, and Ser325 together coordinate FAD.

This sequence belongs to the ferredoxin--NADP reductase type 2 family. Homodimer. FAD is required as a cofactor.

It catalyses the reaction 2 reduced [2Fe-2S]-[ferredoxin] + NADP(+) + H(+) = 2 oxidized [2Fe-2S]-[ferredoxin] + NADPH. This chain is Ferredoxin--NADP reductase, found in Limosilactobacillus fermentum (strain NBRC 3956 / LMG 18251) (Lactobacillus fermentum).